The following is a 2057-amino-acid chain: Rho guanine nucleotide exchange factor 17 (2057 aa).

Disordered regions lie at residues 20–361, 375–461, and 481–559; these read ERWS…DTGG, LASP…SNPD, and RVRK…LKPS. 2 positions are modified to phosphoserine: Ser142 and Ser152. The span at 227 to 249 shows a compositional bias: low complexity; it reads ARASSSSSIASSYPVSRSRAASS. Residues Ser305 and Ser308 each carry the phosphoserine modification. Positions 314–323 are enriched in gly residues; the sequence is GGLGSAGGVG. Ser324, Ser330, Ser377, Ser381, Ser389, Ser404, and Ser414 each carry phosphoserine. The span at 382–391 shows a compositional bias: polar residues; it reads RGSSRYSSTE. Positions 440–451 are enriched in basic and acidic residues; sequence PLRDGGLDLDKN. Position 456 is a phosphoserine (Ser456). Residues 507–524 are compositionally biased toward low complexity; it reads EQSESTLSQSPTSPTTRP. 2 positions are modified to phosphoserine: Ser538 and Ser611. Disordered regions lie at residues 615–647 and 663–952; these read AGDMTQGHRSQEELSGPESNLTDEGIGADPEPL and LSST…VRHA. The span at 663-672 shows a compositional bias: polar residues; it reads LSSTSAQTNH. Ser689 bears the Phosphoserine mark. Phosphothreonine occurs at positions 692 and 695. Polar residues predominate over residues 710–719; sequence PNGTELSNGE. Ser728 bears the Phosphoserine mark. Residues 747–760 show a composition bias toward polar residues; that stretch reads SVDSNLLGSLNSKT. Positions 820–829 are enriched in basic and acidic residues; the sequence is SLSDPSRRGE. Ser906 carries the post-translational modification Phosphoserine. Residues 909-920 are compositionally biased toward basic residues; it reads LTRRGSKKRPAR. Positions 922 to 931 are enriched in basic and acidic residues; that stretch reads SHQELRREEG. The segment covering 933–944 has biased composition (polar residues); sequence QDQTGSLTQTRS. Phosphoserine is present on residues Ser953 and Ser994. The segment covering 1015-1027 has biased composition (pro residues); it reads GPVDLPCLPPSAP. Positions 1015–1054 are disordered; the sequence is GPVDLPCLPPSAPPSTETKPSGAARATPDEPAPASKCCSK. In terms of domain architecture, DH spans 1059–1247; sequence MRKHVTMTLL…KQVAERINKG (189 aa). Ser1324 is subject to Phosphoserine. 2 disordered regions span residues 1555 to 1713 and 1983 to 2050; these read RCPR…SSRG and CSTP…DSTN. Over residues 1579–1589 the composition is skewed to acidic residues; that stretch reads LDVEATAEEEA. The segment covering 1638–1674 has biased composition (low complexity); that stretch reads SPSPSGTLQSQASQSTISSSFGNEETPSSKEATAETT.

In terms of biological role, acts as a guanine nucleotide exchange factor (GEF) for RhoA GTPases. In Mus musculus (Mouse), this protein is Rho guanine nucleotide exchange factor 17 (Arhgef17).